The primary structure comprises 167 residues: NADH-ubiquinone oxidoreductase chain 6 (167 aa).

5 consecutive transmembrane segments (helical) span residues 1 to 21 (MVLMVVFSVMFLISLIAVASN), 23 to 43 (SPYFAAFGLMVGAGVGCGMLM), 47 to 67 (MTFLSMILFLIYLGGMLVVFA), 86 to 106 (VFSYVLVYMFLVIVAWVAFVG), and 133 to 153 (AGGYMLFIAGWVLLMALLVVL).

The protein belongs to the complex I subunit 6 family.

The protein localises to the mitochondrion membrane. The catalysed reaction is a ubiquinone + NADH + 5 H(+)(in) = a ubiquinol + NAD(+) + 4 H(+)(out). In terms of biological role, core subunit of the mitochondrial membrane respiratory chain NADH dehydrogenase (Complex I) that is believed to belong to the minimal assembly required for catalysis. Complex I functions in the transfer of electrons from NADH to the respiratory chain. The immediate electron acceptor for the enzyme is believed to be ubiquinone. The chain is NADH-ubiquinone oxidoreductase chain 6 (MT-ND6) from Polypterus ornatipinnis (Ornate bichir).